The chain runs to 476 residues: Eukaryotic translation initiation factor 3 subunit L (476 aa).

The 196-residue stretch at 257–452 folds into the PCI domain; sequence DAIRMFSHIL…DLDYALENDL (196 aa).

The protein belongs to the eIF-3 subunit L family. Component of the eukaryotic translation initiation factor 3 (eIF-3) complex.

The protein localises to the cytoplasm. In terms of biological role, component of the eukaryotic translation initiation factor 3 (eIF-3) complex, which is involved in protein synthesis of a specialized repertoire of mRNAs and, together with other initiation factors, stimulates binding of mRNA and methionyl-tRNAi to the 40S ribosome. The eIF-3 complex specifically targets and initiates translation of a subset of mRNAs involved in cell proliferation. In Aspergillus niger (strain ATCC MYA-4892 / CBS 513.88 / FGSC A1513), this protein is Eukaryotic translation initiation factor 3 subunit L.